The following is a 550-amino-acid chain: CTP synthase (550 aa).

The amidoligase domain stretch occupies residues 1–265 (MTKFIFVTGG…DEIVVEQLGL (265 aa)). Serine 13 contributes to the CTP binding site. Serine 13 is a UTP binding site. 14-19 (SLGKGI) contacts ATP. An L-glutamine-binding site is contributed by tyrosine 54. An ATP-binding site is contributed by aspartate 71. 2 residues coordinate Mg(2+): aspartate 71 and glutamate 139. Residues 146 to 148 (DIE), 186 to 191 (KTKPTQ), and lysine 222 each bind CTP. UTP is bound by residues 186–191 (KTKPTQ) and lysine 222. In terms of domain architecture, Glutamine amidotransferase type-1 spans 290–541 (TITLVGKYVD…IRAAAEHRRR (252 aa)). Glycine 351 is an L-glutamine binding site. Cysteine 378 (nucleophile; for glutamine hydrolysis) is an active-site residue. Residues 379–382 (LGMQ), glutamate 402, and arginine 469 contribute to the L-glutamine site. Residues histidine 514 and glutamate 516 contribute to the active site.

This sequence belongs to the CTP synthase family. As to quaternary structure, homotetramer.

The enzyme catalyses UTP + L-glutamine + ATP + H2O = CTP + L-glutamate + ADP + phosphate + 2 H(+). It catalyses the reaction L-glutamine + H2O = L-glutamate + NH4(+). It carries out the reaction UTP + NH4(+) + ATP = CTP + ADP + phosphate + 2 H(+). The protein operates within pyrimidine metabolism; CTP biosynthesis via de novo pathway; CTP from UDP: step 2/2. Allosterically activated by GTP, when glutamine is the substrate; GTP has no effect on the reaction when ammonia is the substrate. The allosteric effector GTP functions by stabilizing the protein conformation that binds the tetrahedral intermediate(s) formed during glutamine hydrolysis. Inhibited by the product CTP, via allosteric rather than competitive inhibition. Catalyzes the ATP-dependent amination of UTP to CTP with either L-glutamine or ammonia as the source of nitrogen. Regulates intracellular CTP levels through interactions with the four ribonucleotide triphosphates. This is CTP synthase from Nitrosococcus oceani (strain ATCC 19707 / BCRC 17464 / JCM 30415 / NCIMB 11848 / C-107).